An 897-amino-acid polypeptide reads, in one-letter code: DNA mismatch repair protein MutS (897 aa).

654–661 is a binding site for ATP; sequence GPNMAGKS.

The protein belongs to the DNA mismatch repair MutS family.

This protein is involved in the repair of mismatches in DNA. It is possible that it carries out the mismatch recognition step. This protein has a weak ATPase activity. This Maricaulis maris (strain MCS10) (Caulobacter maris) protein is DNA mismatch repair protein MutS.